The primary structure comprises 198 residues: Na(+)-translocating NADH-quinone reductase subunit E (198 aa).

6 consecutive transmembrane segments (helical) span residues 11–31 (SVFI…FLAV), 35–55 (VSTA…AVPV), 77–97 (FLNF…LEMI), 110–130 (GIFL…SFMV), 140–160 (VVYG…LAGL), and 176–196 (LGIT…FSGI).

The protein belongs to the NqrDE/RnfAE family. In terms of assembly, composed of six subunits; NqrA, NqrB, NqrC, NqrD, NqrE and NqrF.

It is found in the cell inner membrane. It catalyses the reaction a ubiquinone + n Na(+)(in) + NADH + H(+) = a ubiquinol + n Na(+)(out) + NAD(+). In terms of biological role, NQR complex catalyzes the reduction of ubiquinone-1 to ubiquinol by two successive reactions, coupled with the transport of Na(+) ions from the cytoplasm to the periplasm. NqrA to NqrE are probably involved in the second step, the conversion of ubisemiquinone to ubiquinol. This is Na(+)-translocating NADH-quinone reductase subunit E from Haemophilus ducreyi (strain 35000HP / ATCC 700724).